Consider the following 860-residue polypeptide: Leucine--tRNA ligase (860 aa).

Positions 42–52 match the 'HIGH' region motif; the sequence is PYPSGRLHMGH. The short motif at 619 to 623 is the 'KMSKS' region element; that stretch reads KMSKS. K622 is an ATP binding site.

Belongs to the class-I aminoacyl-tRNA synthetase family.

The protein localises to the cytoplasm. It carries out the reaction tRNA(Leu) + L-leucine + ATP = L-leucyl-tRNA(Leu) + AMP + diphosphate. The protein is Leucine--tRNA ligase of Yersinia pseudotuberculosis serotype O:3 (strain YPIII).